We begin with the raw amino-acid sequence, 250 residues long: 3-deoxy-manno-octulosonate cytidylyltransferase (250 aa).

The protein belongs to the KdsB family.

Its subcellular location is the cytoplasm. It carries out the reaction 3-deoxy-alpha-D-manno-oct-2-ulosonate + CTP = CMP-3-deoxy-beta-D-manno-octulosonate + diphosphate. It functions in the pathway nucleotide-sugar biosynthesis; CMP-3-deoxy-D-manno-octulosonate biosynthesis; CMP-3-deoxy-D-manno-octulosonate from 3-deoxy-D-manno-octulosonate and CTP: step 1/1. Its pathway is bacterial outer membrane biogenesis; lipopolysaccharide biosynthesis. In terms of biological role, activates KDO (a required 8-carbon sugar) for incorporation into bacterial lipopolysaccharide in Gram-negative bacteria. The polypeptide is 3-deoxy-manno-octulosonate cytidylyltransferase (Francisella tularensis subsp. holarctica (strain LVS)).